We begin with the raw amino-acid sequence, 361 residues long: Inactive 2'-5'-oligoadenylate synthase 1D (361 aa).

It belongs to the 2-5A synthase family. As to quaternary structure, interacts with OAS1A, the interaction inhibits OAS1A catalytic activity. In terms of tissue distribution, expressed specifically in oocytes (at protein level). Expressed at highest level in ovary with lesser amounts in intestine, brain, thymus lung, kidney, liver and uterus.

It is found in the cytoplasm. In terms of biological role, does not have 2'-5'-oligoadenylate synthetase activity, but can bind double-stranded RNA. May play a role in the control of female fertility, possibly by binding to and inhibiting OAS1A. The chain is Inactive 2'-5'-oligoadenylate synthase 1D from Mus musculus (Mouse).